The following is a 326-amino-acid chain: Chain length determinant protein (326 aa).

Over 1–31 the chain is Cytoplasmic; sequence MRVENNNVSGQNHDPEQIDLIDLLVQLWRGK. A helical transmembrane segment spans residues 32–52; the sequence is MTIIISVIVAIALAIGYLAVA. Topologically, residues 53-295 are periplasmic; sequence KEKWTSTAII…LPIRRDSPKK (243 aa). Residues 296-316 form a helical membrane-spanning segment; that stretch reads AITLILAVLLGGMVGAGIVLG. At 317–326 the chain is on the cytoplasmic side; it reads RNALRNYNAK.

The protein belongs to the WzzB/Cld/Rol family. In terms of assembly, homodimer.

Its subcellular location is the cell inner membrane. Its pathway is bacterial outer membrane biogenesis; lipopolysaccharide biosynthesis. Its function is as follows. Confers a modal distribution of chain length on the O-antigen component of lipopolysaccharide (LPS). Gives rise to a reduced number of short chain molecules and increases in numbers of longer molecules. The protein is Chain length determinant protein (wzzB) of Escherichia coli (strain K12).